The primary structure comprises 393 residues: Rubredoxin-NAD(+) reductase (393 aa).

Residues 9 to 12, 33 to 34, lysine 42, valine 80, glutamate 162, aspartate 282, valine 294, and lysine 325 contribute to the FAD site; these read SGMA and CA.

The protein belongs to the FAD-dependent oxidoreductase family. Homodimer. The cofactor is FAD.

Its subcellular location is the cytoplasm. It catalyses the reaction 2 reduced [rubredoxin] + NAD(+) + H(+) = 2 oxidized [rubredoxin] + NADH. It functions in the pathway hydrocarbon metabolism; alkane degradation. Its function is as follows. Involved in the hydrocarbon hydroxylating system, which transfers electrons from NADH to rubredoxin reductase and then through rubredoxin to alkane 1 monooxygenase. This is Rubredoxin-NAD(+) reductase (rubB) from Acinetobacter baylyi (strain ATCC 33305 / BD413 / ADP1).